The chain runs to 62 residues: Conotoxin Pl168 (62 aa).

The signal sequence occupies residues 1-21 (MGMRMMFTVFLLVVLATTVVS). Residues 22-40 (FTLDRASDGANAAADLVAR) constitute a propeptide that is removed on maturation. 2 disulfide bridges follow: C46–C52 and C47–C61.

The protein belongs to the conotoxin A superfamily. In terms of processing, both Pro-53 and Pro-62 are not in cis/trans isomerization. Expressed by the venom duct.

Its subcellular location is the secreted. Probable neurotoxin with unknown target. Possibly targets ion channels. This is Conotoxin Pl168 from Conus planorbis (Planorbis cone).